The chain runs to 75 residues: DNA-directed RNA polymerase subunit omega (75 aa).

This sequence belongs to the RNA polymerase subunit omega family. As to quaternary structure, in cyanobacteria the RNAP catalytic core is composed of 2 alpha, 1 beta, 1 beta', 1 gamma and 1 omega subunit. When a sigma factor is associated with the core the holoenzyme is formed, which can initiate transcription.

The catalysed reaction is RNA(n) + a ribonucleoside 5'-triphosphate = RNA(n+1) + diphosphate. In terms of biological role, promotes RNA polymerase assembly. Latches the N- and C-terminal regions of the beta' subunit thereby facilitating its interaction with the beta and alpha subunits. In Synechococcus sp. (strain CC9311), this protein is DNA-directed RNA polymerase subunit omega.